A 208-amino-acid chain; its full sequence is Large ribosomal subunit protein bL25 (208 aa).

It belongs to the bacterial ribosomal protein bL25 family. CTC subfamily. In terms of assembly, part of the 50S ribosomal subunit; part of the 5S rRNA/L5/L18/L25 subcomplex. Contacts the 5S rRNA. Binds to the 5S rRNA independently of L5 and L18.

Its function is as follows. This is one of the proteins that binds to the 5S RNA in the ribosome where it forms part of the central protuberance. The chain is Large ribosomal subunit protein bL25 from Phenylobacterium zucineum (strain HLK1).